The primary structure comprises 313 residues: Putative S-adenosyl-L-methionine-dependent methyltransferase MAV_5149 (313 aa).

S-adenosyl-L-methionine-binding positions include D135 and D164–L165.

It belongs to the UPF0677 family.

Exhibits S-adenosyl-L-methionine-dependent methyltransferase activity. The polypeptide is Putative S-adenosyl-L-methionine-dependent methyltransferase MAV_5149 (Mycobacterium avium (strain 104)).